A 624-amino-acid polypeptide reads, in one-letter code: tRNA uridine 5-carboxymethylaminomethyl modification enzyme MnmG (624 aa).

FAD contacts are provided by residues 16 to 21, Val-128, and Ser-183; that span reads GAGHAG. Residue 275–289 participates in NAD(+) binding; the sequence is GPRYCPSIEDKVVRF. Gln-372 contacts FAD.

Belongs to the MnmG family. As to quaternary structure, homodimer. Heterotetramer of two MnmE and two MnmG subunits. Requires FAD as cofactor.

Its subcellular location is the cytoplasm. NAD-binding protein involved in the addition of a carboxymethylaminomethyl (cmnm) group at the wobble position (U34) of certain tRNAs, forming tRNA-cmnm(5)s(2)U34. The protein is tRNA uridine 5-carboxymethylaminomethyl modification enzyme MnmG of Geobacter metallireducens (strain ATCC 53774 / DSM 7210 / GS-15).